Reading from the N-terminus, the 454-residue chain is Mannosylfructose-phosphate synthase (454 aa).

The protein belongs to the glycosyltransferase 1 family. The cofactor is Mg(2+). Mn(2+) serves as cofactor.

The catalysed reaction is beta-D-fructose 6-phosphate + GDP-alpha-D-mannose = beta-D-fructofuranosyl alpha-D-mannopyranoside 6(F)-phosphate + GDP + H(+). It participates in carbohydrate metabolism; mannosylfructose biosynthesis; beta-D-fructofuranosyl alpha-D-mannopyranoside from D-fructose 6-phosphate and GDP-alpha-D-mannose: step 1/2. The chain is Mannosylfructose-phosphate synthase from Agrobacterium fabrum (strain C58 / ATCC 33970) (Agrobacterium tumefaciens (strain C58)).